The following is a 318-amino-acid chain: NADH-ubiquinone oxidoreductase chain 1 (318 aa).

The next 8 membrane-spanning stretches (helical) occupy residues 2 to 22 (FMINLFSLIIPILLAVAFLTL), 69 to 89 (FMFTIAPALALTLALTMWVPL), 102 to 122 (MLFILAMSSLAVYSILWSGWA), 146 to 166 (LAIILLPTMLMNGSFTLSTLT), 171 to 191 (HLWLIFPLWPLAMMWFVSTLA), 231 to 251 (IIMMNALTAILFLGTFHNPLL), 253 to 273 (EAHTINLILKTSLLTICFLWV), and 294 to 314 (LPLTLALCMWHMSIPIMLACI).

This sequence belongs to the complex I subunit 1 family. Core subunit of respiratory chain NADH dehydrogenase (Complex I) which is composed of 45 different subunits.

It localises to the mitochondrion inner membrane. The catalysed reaction is a ubiquinone + NADH + 5 H(+)(in) = a ubiquinol + NAD(+) + 4 H(+)(out). Core subunit of the mitochondrial membrane respiratory chain NADH dehydrogenase (Complex I) which catalyzes electron transfer from NADH through the respiratory chain, using ubiquinone as an electron acceptor. Essential for the catalytic activity and assembly of complex I. This Dugong dugon (Dugong) protein is NADH-ubiquinone oxidoreductase chain 1 (MT-ND1).